Consider the following 100-residue polypeptide: Urease subunit gamma (100 aa).

It belongs to the urease gamma subunit family. Heterotrimer of UreA (gamma), UreB (beta) and UreC (alpha) subunits. Three heterotrimers associate to form the active enzyme.

It is found in the cytoplasm. It carries out the reaction urea + 2 H2O + H(+) = hydrogencarbonate + 2 NH4(+). It functions in the pathway nitrogen metabolism; urea degradation; CO(2) and NH(3) from urea (urease route): step 1/1. The chain is Urease subunit gamma from Rhodococcus opacus (strain B4).